Here is a 315-residue protein sequence, read N- to C-terminus: MQKPWVEKYRPETLPEVVGHHEIIKRLTNYVEKKSMPHLLFSGSPGVGKTTAALALAKDLYGDTWRENFLELNSSDERGIDVIRTKVKDFARTKPIGDAPFKVIFLDESDALTSDAQNALRRTMEKYSDICRFILSCNYPSKIIPPIQSRCAIFRFSPLKTEDLVENLKDISEKETLTLEKGGIDAIIYVSEGDMRKAINVLQTAAAVSDTVTEEIVYKVASKARPDEIKKMTQLALNGKFVEAREQLYNLMIDWGMSGEDILIQVFREVPNLDISEKEKVHLVEAIGECDFRIVEGSNERIQLSALLAKMGILE.

ATP is bound at residue 43 to 50 (GSPGVGKT).

The protein belongs to the activator 1 small subunits family. RfcS subfamily. Heteromultimer composed of small subunits (RfcS) and large subunits (RfcL).

In terms of biological role, part of the RFC clamp loader complex which loads the PCNA sliding clamp onto DNA. In Methanococcus maripaludis (strain C6 / ATCC BAA-1332), this protein is Replication factor C small subunit.